Reading from the N-terminus, the 375-residue chain is Succinyl-diaminopimelate desuccinylase (375 aa).

Histidine 66 is a Zn(2+) binding site. Aspartate 68 is a catalytic residue. Aspartate 99 is a binding site for Zn(2+). Glutamate 133 functions as the Proton acceptor in the catalytic mechanism. The Zn(2+) site is built by glutamate 134, glutamate 162, and histidine 348.

It belongs to the peptidase M20A family. DapE subfamily. Homodimer. Zn(2+) is required as a cofactor. It depends on Co(2+) as a cofactor.

It catalyses the reaction N-succinyl-(2S,6S)-2,6-diaminopimelate + H2O = (2S,6S)-2,6-diaminopimelate + succinate. It participates in amino-acid biosynthesis; L-lysine biosynthesis via DAP pathway; LL-2,6-diaminopimelate from (S)-tetrahydrodipicolinate (succinylase route): step 3/3. In terms of biological role, catalyzes the hydrolysis of N-succinyl-L,L-diaminopimelic acid (SDAP), forming succinate and LL-2,6-diaminopimelate (DAP), an intermediate involved in the bacterial biosynthesis of lysine and meso-diaminopimelic acid, an essential component of bacterial cell walls. This is Succinyl-diaminopimelate desuccinylase from Shigella flexneri serotype 5b (strain 8401).